The following is a 72-amino-acid chain: Translation initiation factor IF-1 (72 aa).

An S1-like domain is found at 1-72 (MARDDVIEVD…DKGRITFRYK (72 aa)).

The protein belongs to the IF-1 family. Component of the 30S ribosomal translation pre-initiation complex which assembles on the 30S ribosome in the order IF-2 and IF-3, IF-1 and N-formylmethionyl-tRNA(fMet); mRNA recruitment can occur at any time during PIC assembly.

The protein resides in the cytoplasm. In terms of biological role, one of the essential components for the initiation of protein synthesis. Stabilizes the binding of IF-2 and IF-3 on the 30S subunit to which N-formylmethionyl-tRNA(fMet) subsequently binds. Helps modulate mRNA selection, yielding the 30S pre-initiation complex (PIC). Upon addition of the 50S ribosomal subunit IF-1, IF-2 and IF-3 are released leaving the mature 70S translation initiation complex. The polypeptide is Translation initiation factor IF-1 (Helicobacter pylori (strain HPAG1)).